The primary structure comprises 39 residues: Glutenin, high molecular weight subunit PC237 (39 aa).

Belongs to the gliadin/glutenin family. As to quaternary structure, disulfide-bridge linked aggregates.

Its function is as follows. Glutenins are high-molecular weight seed storage proteins of wheat endosperm. Thought to be responsible for the visco-elastic property of wheat dough. In Triticum aestivum (Wheat), this protein is Glutenin, high molecular weight subunit PC237.